We begin with the raw amino-acid sequence, 204 residues long: CASP-like protein 4B4 (204 aa).

The Cytoplasmic segment spans residues 1–60 (MSAAVAASSGAPAADVEKGAAAADANVDGGGAPAAAAASGEGVVSAVVRRWRRQDLLEKS). Residues 61-81 (GSALRVAAWAFSLLAFVVMGA) form a helical membrane-spanning segment. Over 82–98 (NDHGDWRQFEHYEEYRY) the chain is Extracellular. Residues 99-119 (VVAIGVLAFIYTTLQLVRHGV) traverse the membrane as a helical segment. The Cytoplasmic portion of the chain corresponds to 120–130 (RLTGGQDLQGK). A helical membrane pass occupies residues 131 to 151 (VAVLVDFAGDQVTAYLLMSAV). Residues 152 to 175 (SAAIPITNRMREGADNVFTDSSAA) are Extracellular-facing. Residues 176-196 (SISMAFFAFLCLALSALVSGF) traverse the membrane as a helical segment. Over 197-204 (KLAKQTYI) the chain is Cytoplasmic.

It belongs to the Casparian strip membrane proteins (CASP) family. Homodimer and heterodimers.

It localises to the cell membrane. This chain is CASP-like protein 4B4, found in Oryza sativa subsp. japonica (Rice).